Reading from the N-terminus, the 337-residue chain is Porphobilinogen deaminase (337 aa).

C254 is modified (S-(dipyrrolylmethanemethyl)cysteine).

This sequence belongs to the HMBS family. It depends on dipyrromethane as a cofactor.

It carries out the reaction 4 porphobilinogen + H2O = hydroxymethylbilane + 4 NH4(+). The protein operates within porphyrin-containing compound metabolism; protoporphyrin-IX biosynthesis; coproporphyrinogen-III from 5-aminolevulinate: step 2/4. Its function is as follows. Tetrapolymerization of the monopyrrole PBG into the hydroxymethylbilane pre-uroporphyrinogen in several discrete steps. The chain is Porphobilinogen deaminase (pda-1) from Neurospora crassa (strain ATCC 24698 / 74-OR23-1A / CBS 708.71 / DSM 1257 / FGSC 987).